The chain runs to 786 residues: LPS-assembly protein LptD (786 aa).

Residues 1 to 24 form the signal peptide; that stretch reads MSFTSRSLLASFTGCLLYGTPAIA.

Belongs to the LptD family. In terms of assembly, component of the lipopolysaccharide transport and assembly complex. Interacts with LptE and LptA.

It localises to the cell outer membrane. In terms of biological role, together with LptE, is involved in the assembly of lipopolysaccharide (LPS) at the surface of the outer membrane. The sequence is that of LPS-assembly protein LptD from Aliivibrio fischeri (strain ATCC 700601 / ES114) (Vibrio fischeri).